A 147-amino-acid chain; its full sequence is uncharacterized protein (147 aa).

The Rhodanese domain maps to Y52–C145.

This is an uncharacterized protein from Buchnera aphidicola subsp. Baizongia pistaciae (strain Bp).